A 211-amino-acid polypeptide reads, in one-letter code: Protein-L-isoaspartate O-methyltransferase (211 aa).

The active site involves serine 60.

This sequence belongs to the methyltransferase superfamily. L-isoaspartyl/D-aspartyl protein methyltransferase family.

It localises to the cytoplasm. It carries out the reaction [protein]-L-isoaspartate + S-adenosyl-L-methionine = [protein]-L-isoaspartate alpha-methyl ester + S-adenosyl-L-homocysteine. In terms of biological role, catalyzes the methyl esterification of L-isoaspartyl residues in peptides and proteins that result from spontaneous decomposition of normal L-aspartyl and L-asparaginyl residues. It plays a role in the repair and/or degradation of damaged proteins. The sequence is that of Protein-L-isoaspartate O-methyltransferase from Ectopseudomonas mendocina (strain ymp) (Pseudomonas mendocina).